Here is a 391-residue protein sequence, read N- to C-terminus: D-xylose 1-dehydrogenase (NADP(+)) (391 aa).

The protein belongs to the Gfo/Idh/MocA family.

It carries out the reaction D-xylose + NADP(+) = D-xylono-1,5-lactone + NADPH + H(+). Its function is as follows. NADP-dependent D-xylose dehydrogenase catalyzing the oxydation of D-xylose into D-xylonolactone. Also displays some, albeit lower activity with D-glucose, D-galactose and L-arabinose as substrate. Probably not involved in D-xylose degradation, as it has been shown that H.jecorina assimilates D-xylose via D-xylose reductase and xylitol dehydrogenase, and it is unable to grow on D-xylonic acid as sole carbon source. May play a role in the regeneration of NADP(+) in the presence of D-xylose. The polypeptide is D-xylose 1-dehydrogenase (NADP(+)) (Hypocrea jecorina (strain ATCC 56765 / BCRC 32924 / NRRL 11460 / Rut C-30) (Trichoderma reesei)).